A 234-amino-acid chain; its full sequence is OVARIAN TUMOR DOMAIN-containing deubiquitinating enzyme 3 (234 aa).

The region spanning 76 to 234 (YAVDRVKGDG…SGRNHYDLLR (159 aa)) is the OTU domain. The cys-loop stretch occupies residues 81-87 (VKGDGRC). The active site involves aspartate 84. Residue cysteine 87 is the Nucleophile of the active site. The tract at residues 154–164 (IGRHDFWGGES) is variable-loop. A his-loop region spans residues 224 to 229 (YSGRNH). Histidine 229 is an active-site residue.

Belongs to the peptidase C85 family.

The enzyme catalyses Thiol-dependent hydrolysis of ester, thioester, amide, peptide and isopeptide bonds formed by the C-terminal Gly of ubiquitin (a 76-residue protein attached to proteins as an intracellular targeting signal).. Hydrolase that can remove conjugated ubiquitin from proteins in vitro and may therefore play an important regulatory role at the level of protein turnover by preventing degradation. Cysteine protease with a preference for 'Lys-63' over 'Lys-48' over 'Met-1' -linked ubiquitin (UB) tetramers (e.g. Ub3 and Ub4) as substrates. Also cleaves RUB-GST fusion. The polypeptide is OVARIAN TUMOR DOMAIN-containing deubiquitinating enzyme 3 (Arabidopsis thaliana (Mouse-ear cress)).